We begin with the raw amino-acid sequence, 353 residues long: Aliphatic aldoxime dehydratase (353 aa).

Position 219 (Ser-219) interacts with an aliphatic aldoxime. A heme b-binding site is contributed by His-299. His-320 contributes to the an aliphatic aldoxime binding site. His-320 is a catalytic residue.

The protein belongs to the heme-containing dehydratase family. As to quaternary structure, homodimer. It depends on heme b as a cofactor.

It carries out the reaction an aliphatic aldoxime = a nitrile + H2O. Active when the heme iron is in the ferrous state. Activated by FMN, Fe(2+), Sn(2+), Na(2)SO(3), Na(2)S and vitamin K3. Functionally, catalyzes the dehydration of aldoximes to their corresponding nitrile. Is active toward various arylalkyl- and alkyl-aldoximes, and to a lesser extent toward aryl-aldoximes. The protein is Aliphatic aldoxime dehydratase of Rhodococcus globerulus.